The chain runs to 664 residues: Glycine--tRNA ligase beta subunit (664 aa).

The protein belongs to the class-II aminoacyl-tRNA synthetase family. In terms of assembly, tetramer of two alpha and two beta subunits.

The protein localises to the cytoplasm. It catalyses the reaction tRNA(Gly) + glycine + ATP = glycyl-tRNA(Gly) + AMP + diphosphate. This is Glycine--tRNA ligase beta subunit from Rickettsia felis (strain ATCC VR-1525 / URRWXCal2) (Rickettsia azadi).